Here is a 213-residue protein sequence, read N- to C-terminus: Thymidylate kinase (213 aa).

An ATP-binding site is contributed by 10–17 (GPDGAGKT).

It belongs to the thymidylate kinase family.

The enzyme catalyses dTMP + ATP = dTDP + ADP. Functionally, phosphorylation of dTMP to form dTDP in both de novo and salvage pathways of dTTP synthesis. In Limosilactobacillus reuteri (strain DSM 20016) (Lactobacillus reuteri), this protein is Thymidylate kinase.